Reading from the N-terminus, the 282-residue chain is tRNA (guanine-N(7)-)-methyltransferase (282 aa).

Residues 1–29 (MPHAPAKRQKREEYKNALHEDESNAALPK) are disordered. Basic and acidic residues predominate over residues 10-22 (KREEYKNALHEDE). S-adenosyl-L-methionine-binding positions include glycine 104, 153–154 (NT), and cysteine 173. The active site involves aspartate 176. 255 to 257 (TEE) serves as a coordination point for S-adenosyl-L-methionine.

This sequence belongs to the class I-like SAM-binding methyltransferase superfamily. TrmB family. In terms of assembly, forms a complex with TRM82.

The protein localises to the nucleus. The catalysed reaction is guanosine(46) in tRNA + S-adenosyl-L-methionine = N(7)-methylguanosine(46) in tRNA + S-adenosyl-L-homocysteine. It functions in the pathway tRNA modification; N(7)-methylguanine-tRNA biosynthesis. In terms of biological role, catalyzes the formation of N(7)-methylguanine at position 46 (m7G46) in tRNA. This Phaeosphaeria nodorum (strain SN15 / ATCC MYA-4574 / FGSC 10173) (Glume blotch fungus) protein is tRNA (guanine-N(7)-)-methyltransferase.